The primary structure comprises 309 residues: MNKVALPPTQPLPDAQAWQGAMSDVGLDWVGMQGIALPLELAGKPLMAKVNAGINLRASRHGARGIHMSRLYLTLDELTQGELTPQRIADSLRAFLASQPEHSDSASLSISGELMLSRPALLSAHRGWKAYPLKIDASLTTGLTLSLTVGVPYSSTCPSSAALSRQLAQQQFQFDFEQAPDKVSQQQVIDWLGEQGMPGTPHSQRSWAWVTVTLNEGEAELPVVNLIDRIEHALGTPLQTLVKRQDEQAFALANGQNLMFCEDAARRLYRMLRSQCHHRAFSLRVEHQESLHAHNAVAELSWQEAGNAA.

It belongs to the GTP cyclohydrolase IV family.

The catalysed reaction is GTP + H2O = 7,8-dihydroneopterin 3'-triphosphate + formate + H(+). Its pathway is cofactor biosynthesis; 7,8-dihydroneopterin triphosphate biosynthesis; 7,8-dihydroneopterin triphosphate from GTP: step 1/1. Its function is as follows. Converts GTP to 7,8-dihydroneopterin triphosphate. The chain is GTP cyclohydrolase FolE2 from Serratia proteamaculans (strain 568).